Consider the following 664-residue polypeptide: UvrABC system protein B (664 aa).

The 146-residue stretch at 25–170 folds into the Helicase ATP-binding domain; sequence NSILLGNKYQ…FVGQRISIKE (146 aa). 38–45 is an ATP binding site; it reads GVTGSGKT. The short motif at 91-114 is the Beta-hairpin element; it reads YYDYYQPESYVPSKDLFIEKEATI. Residues 429–595 form the Helicase C-terminal domain; the sequence is QMEDLYIEIQ…TIVKKIQNIL (167 aa). A UVR domain is found at 622 to 657; the sequence is KKLIDKLKFELEEAVNDERFEDAIVLRDKIKELGSK.

This sequence belongs to the UvrB family. Forms a heterotetramer with UvrA during the search for lesions. Interacts with UvrC in an incision complex.

It is found in the cytoplasm. Its function is as follows. The UvrABC repair system catalyzes the recognition and processing of DNA lesions. A damage recognition complex composed of 2 UvrA and 2 UvrB subunits scans DNA for abnormalities. Upon binding of the UvrA(2)B(2) complex to a putative damaged site, the DNA wraps around one UvrB monomer. DNA wrap is dependent on ATP binding by UvrB and probably causes local melting of the DNA helix, facilitating insertion of UvrB beta-hairpin between the DNA strands. Then UvrB probes one DNA strand for the presence of a lesion. If a lesion is found the UvrA subunits dissociate and the UvrB-DNA preincision complex is formed. This complex is subsequently bound by UvrC and the second UvrB is released. If no lesion is found, the DNA wraps around the other UvrB subunit that will check the other stand for damage. In Borreliella afzelii (strain PKo) (Borrelia afzelii), this protein is UvrABC system protein B.